Here is a 177-residue protein sequence, read N- to C-terminus: Small ribosomal subunit protein uS4 (177 aa).

Positions 104-166 constitute an S4 RNA-binding domain; the sequence is RRLQTIVYKK…PTSPFKQHPP (63 aa). The tract at residues 158–177 is disordered; it reads TSPFKQHPPTQQGEENVQQA. Residues 165–177 are compositionally biased toward polar residues; sequence PPTQQGEENVQQA.

It belongs to the universal ribosomal protein uS4 family. Part of the 30S ribosomal subunit. Contacts protein S5. The interaction surface between S4 and S5 is involved in control of translational fidelity.

One of the primary rRNA binding proteins, it binds directly to 16S rRNA where it nucleates assembly of the body of the 30S subunit. In terms of biological role, with S5 and S12 plays an important role in translational accuracy. In Sulfurisphaera tokodaii (strain DSM 16993 / JCM 10545 / NBRC 100140 / 7) (Sulfolobus tokodaii), this protein is Small ribosomal subunit protein uS4.